Reading from the N-terminus, the 106-residue chain is uncharacterized protein (106 aa).

The region spanning 1–93 (MSIFYVLGKK…WEAKWKEAKI (93 aa)) is the HTH hxlR-type domain.

This is an uncharacterized protein from Methanocaldococcus jannaschii (strain ATCC 43067 / DSM 2661 / JAL-1 / JCM 10045 / NBRC 100440) (Methanococcus jannaschii).